We begin with the raw amino-acid sequence, 147 residues long: Putative pre-16S rRNA nuclease (147 aa).

The protein belongs to the YqgF nuclease family.

Its subcellular location is the cytoplasm. In terms of biological role, could be a nuclease involved in processing of the 5'-end of pre-16S rRNA. This is Putative pre-16S rRNA nuclease from Polynucleobacter necessarius subsp. necessarius (strain STIR1).